The following is a 1074-amino-acid chain: Fibrous sheath CABYR-binding protein (1074 aa).

Residues 1–73 (MEECEEPEEP…SKDNYSRKEY (73 aa)) form a disordered region. 4 positions are modified to phosphoserine: S25, S57, S186, and S275. Disordered stretches follow at residues 272-294 (QAPSPAEETSAAETATTTAKDVV) and 317-343 (LVQGALSDKPSDQQYPQGTEMAPSELP). The segment covering 274-290 (PSPAEETSAAETATTTA) has biased composition (low complexity). Position 365 is a phosphoserine (S365). Disordered stretches follow at residues 437-789 (VSAD…PLES) and 818-982 (GVPA…PLKT). The segment covering 448–467 (PPSAEDASEEVASSEVLPPS) has biased composition (low complexity). Pro residues predominate over residues 528 to 544 (VLPPPAEEAPAEVPPPL). Residues 558–575 (EEGPAEVPLAPAEEVPAE) show a composition bias toward low complexity. Composition is skewed to pro residues over residues 576 to 592 (FLPPPAEEVPAEVPPPL) and 673 to 688 (PLPPTAERPEEAPPPA). The span at 689–720 (TEEAPVEVLPPATEEAPVEVLPPATEEAPVEV) shows a compositional bias: low complexity. A Phosphoserine modification is found at S1020. The tract at residues 1026–1054 (SEKELESTTLTSDKMSEGIDSVPEDVSGT) is disordered.

As to quaternary structure, interacts with CABYR. Interacts with ROPN1 and ROPN1L; the interaction increases upon spermatozoa capacitation conditions. In terms of processing, phosphorylated by PKA upon spermatozoa capacitation conditions. Expression is restricted to testis and epididymis, expressed by spermatozoa.

Its subcellular location is the cell projection. It is found in the cilium. The protein localises to the flagellum. May be involved in the later stages of fibrous sheath biogenesis and spermatozoa capacitation. Inhibits ROPN1 and ROPN1L SUMOylation. Binds calcium. The chain is Fibrous sheath CABYR-binding protein from Mus musculus (Mouse).